Here is a 462-residue protein sequence, read N- to C-terminus: Fasciclin-like arabinogalactan protein 18 (462 aa).

An N-terminal signal peptide occupies residues 1–25; sequence MDRCIYGCSVITIFFSFFFLLNASA. N-linked (GlcNAc...) asparagine glycans are attached at residues asparagine 32, asparagine 77, and asparagine 293. 2 FAS1 domains span residues 40 to 185 and 271 to 414; these read NSNS…ERLL and VKDF…DGVL.

The protein belongs to the fasciclin-like AGP family.

Its subcellular location is the secreted. In terms of biological role, may be a cell surface adhesion protein. The sequence is that of Fasciclin-like arabinogalactan protein 18 (FLA18) from Arabidopsis thaliana (Mouse-ear cress).